The sequence spans 93 residues: Putative septation protein SpoVG (93 aa).

Belongs to the SpoVG family.

Could be involved in septation. The chain is Putative septation protein SpoVG from Treponema denticola (strain ATCC 35405 / DSM 14222 / CIP 103919 / JCM 8153 / KCTC 15104).